Consider the following 225-residue polypeptide: Probable molybdenum cofactor guanylyltransferase (225 aa).

GTP is bound by residues 20–22 (LAG), Lys-33, Asp-88, and Asp-117. Asp-117 lines the Mg(2+) pocket.

Belongs to the MobA family. Mg(2+) is required as a cofactor.

It localises to the cytoplasm. The catalysed reaction is Mo-molybdopterin + GTP + H(+) = Mo-molybdopterin guanine dinucleotide + diphosphate. Its function is as follows. Transfers a GMP moiety from GTP to Mo-molybdopterin (Mo-MPT) cofactor (Moco or molybdenum cofactor) to form Mo-molybdopterin guanine dinucleotide (Mo-MGD) cofactor. The polypeptide is Probable molybdenum cofactor guanylyltransferase (Methanosarcina acetivorans (strain ATCC 35395 / DSM 2834 / JCM 12185 / C2A)).